The following is a 185-amino-acid chain: Ribosome maturation factor RimM (185 aa).

Residues 106 to 185 (SGEYYWKDLL…IIEVDWDPGF (80 aa)) enclose the PRC barrel domain.

The protein belongs to the RimM family. In terms of assembly, binds ribosomal protein uS19.

It localises to the cytoplasm. An accessory protein needed during the final step in the assembly of 30S ribosomal subunit, possibly for assembly of the head region. Essential for efficient processing of 16S rRNA. May be needed both before and after RbfA during the maturation of 16S rRNA. It has affinity for free ribosomal 30S subunits but not for 70S ribosomes. This is Ribosome maturation factor RimM from Sodalis glossinidius (strain morsitans).